The following is a 350-amino-acid chain: tRNA uridine(34) hydroxylase (350 aa).

The Rhodanese domain maps to 146-240 (DDPDAVFIDM…YARRARAQGL (95 aa)). Cysteine 200 (cysteine persulfide intermediate) is an active-site residue. Over residues 319–328 (RRRRAGRENG) the composition is skewed to basic and acidic residues. Residues 319-350 (RRRRAGRENGNKIFNKSRGRLNSKLSIPDPAE) form a disordered region.

The protein belongs to the TrhO family.

It catalyses the reaction uridine(34) in tRNA + AH2 + O2 = 5-hydroxyuridine(34) in tRNA + A + H2O. Its function is as follows. Catalyzes oxygen-dependent 5-hydroxyuridine (ho5U) modification at position 34 in tRNAs. This Salmonella typhimurium (strain LT2 / SGSC1412 / ATCC 700720) protein is tRNA uridine(34) hydroxylase.